An 832-amino-acid polypeptide reads, in one-letter code: FAST kinase domain-containing protein 1, mitochondrial (832 aa).

The RAP domain occupies 765–825 (VAIEFLDSKA…KDAWIDYLRK (61 aa)).

It belongs to the FAST kinase family.

Its subcellular location is the mitochondrion. Functionally, may regulate the stability of some mitochondrial mRNA species. The protein is FAST kinase domain-containing protein 1, mitochondrial (fastkd1) of Xenopus tropicalis (Western clawed frog).